The chain runs to 340 residues: GTPase Obg (340 aa).

The Obg domain occupies 1–159 (MGFIDEVKLC…KHVLLKLKVL (159 aa)). In terms of domain architecture, OBG-type G spans 160–329 (SDVGIIGMPN…LSEKLKKSNS (170 aa)). GTP-binding positions include 166-173 (GMPNAGKS), 191-195 (FTTVR), 212-215 (DIPG), 279-282 (NKCD), and 310-312 (NGD). 2 residues coordinate Mg(2+): S173 and T193.

It belongs to the TRAFAC class OBG-HflX-like GTPase superfamily. OBG GTPase family. Monomer. Mg(2+) is required as a cofactor.

The protein resides in the cytoplasm. In terms of biological role, an essential GTPase which binds GTP, GDP and possibly (p)ppGpp with moderate affinity, with high nucleotide exchange rates and a fairly low GTP hydrolysis rate. Plays a role in control of the cell cycle, stress response, ribosome biogenesis and in those bacteria that undergo differentiation, in morphogenesis control. The protein is GTPase Obg of Wolbachia sp. subsp. Drosophila simulans (strain wRi).